We begin with the raw amino-acid sequence, 236 residues long: NADH-quinone oxidoreductase subunit C (236 aa).

A disordered region spans residues Met-1 to Val-20.

This sequence belongs to the complex I 30 kDa subunit family. In terms of assembly, NDH-1 is composed of 14 different subunits. Subunits NuoB, C, D, E, F, and G constitute the peripheral sector of the complex.

The protein localises to the cell membrane. It carries out the reaction a quinone + NADH + 5 H(+)(in) = a quinol + NAD(+) + 4 H(+)(out). NDH-1 shuttles electrons from NADH, via FMN and iron-sulfur (Fe-S) centers, to quinones in the respiratory chain. The immediate electron acceptor for the enzyme in this species is believed to be a menaquinone. Couples the redox reaction to proton translocation (for every two electrons transferred, four hydrogen ions are translocated across the cytoplasmic membrane), and thus conserves the redox energy in a proton gradient. This is NADH-quinone oxidoreductase subunit C from Mycobacterium tuberculosis (strain ATCC 25177 / H37Ra).